We begin with the raw amino-acid sequence, 187 residues long: UPF0398 protein MW1336 (187 aa).

Belongs to the UPF0398 family.

The sequence is that of UPF0398 protein MW1336 from Staphylococcus aureus (strain MW2).